We begin with the raw amino-acid sequence, 395 residues long: Elongation factor Tu (395 aa).

The tr-type G domain occupies 10 to 204; it reads KPHVNIGTIG…AVDNYIPHPV (195 aa). The tract at residues 19 to 26 is G1; it reads GHVDHGKT. A GTP-binding site is contributed by 19-26; it reads GHVDHGKT. Residue threonine 26 participates in Mg(2+) binding. The segment at 60-64 is G2; sequence GITIS. The tract at residues 81–84 is G3; that stretch reads DCPG. GTP is bound by residues 81–85 and 136–139; these read DCPGH and NKVD. Positions 136 to 139 are G4; the sequence is NKVD. The tract at residues 174–176 is G5; sequence SAL.

This sequence belongs to the TRAFAC class translation factor GTPase superfamily. Classic translation factor GTPase family. EF-Tu/EF-1A subfamily. As to quaternary structure, monomer.

It is found in the cytoplasm. It carries out the reaction GTP + H2O = GDP + phosphate + H(+). Its function is as follows. GTP hydrolase that promotes the GTP-dependent binding of aminoacyl-tRNA to the A-site of ribosomes during protein biosynthesis. In Rickettsia akari (strain Hartford), this protein is Elongation factor Tu.